Consider the following 352-residue polypeptide: Biotin synthase (352 aa).

Residues 44 to 262 form the Radical SAM core domain; sequence NRVQVSTLLS…LAVARILMPQ (219 aa). Positions 59, 63, and 66 each coordinate [4Fe-4S] cluster. [2Fe-2S] cluster-binding residues include Cys-103, Cys-134, Cys-194, and Arg-266.

The protein belongs to the radical SAM superfamily. Biotin synthase family. As to quaternary structure, homodimer. [4Fe-4S] cluster is required as a cofactor. [2Fe-2S] cluster serves as cofactor.

It carries out the reaction (4R,5S)-dethiobiotin + (sulfur carrier)-SH + 2 reduced [2Fe-2S]-[ferredoxin] + 2 S-adenosyl-L-methionine = (sulfur carrier)-H + biotin + 2 5'-deoxyadenosine + 2 L-methionine + 2 oxidized [2Fe-2S]-[ferredoxin]. It participates in cofactor biosynthesis; biotin biosynthesis; biotin from 7,8-diaminononanoate: step 2/2. Functionally, catalyzes the conversion of dethiobiotin (DTB) to biotin by the insertion of a sulfur atom into dethiobiotin via a radical-based mechanism. In Pseudomonas savastanoi pv. phaseolicola (strain 1448A / Race 6) (Pseudomonas syringae pv. phaseolicola (strain 1448A / Race 6)), this protein is Biotin synthase.